A 188-amino-acid chain; its full sequence is Ribosome-recycling factor (188 aa).

This sequence belongs to the RRF family.

The protein resides in the cytoplasm. Its function is as follows. Responsible for the release of ribosomes from messenger RNA at the termination of protein biosynthesis. May increase the efficiency of translation by recycling ribosomes from one round of translation to another. This chain is Ribosome-recycling factor, found in Cereibacter sphaeroides (strain ATCC 17029 / ATH 2.4.9) (Rhodobacter sphaeroides).